We begin with the raw amino-acid sequence, 238 residues long: Calmodulin-binding protein 25 (238 aa).

The segment covering 68 to 78 has biased composition (polar residues); that stretch reads STNTLSSTVSG. Residues 68–87 are disordered; the sequence is STNTLSSTVSGASDPEIIGG. The Bipartite nuclear localization signal motif lies at 92-108; the sequence is KRNCLLTDGKAAKRRAR. A VQ motif is present at residues 125 to 134; that stretch reads FRQMVQQVTG. The tract at residues 201–220 is disordered; sequence SSVGLPSGKPSATADPGGSA.

Interacts with calmodulin (CaM). Interacts with WRKY25 and WRKY51. In terms of tissue distribution, expressed in leaves, flowers and siliques.

It localises to the nucleus. Calmodulin-binding protein that functions as a negative regulator of osmotic stress tolerance. In Arabidopsis thaliana (Mouse-ear cress), this protein is Calmodulin-binding protein 25.